The sequence spans 403 residues: Ribosomal RNA large subunit methyltransferase I (403 aa).

The PUA domain occupies 9-88 (YPRLVLSKGR…ESIDIAFFTR (80 aa)).

This sequence belongs to the methyltransferase superfamily. RlmI family.

The protein resides in the cytoplasm. The catalysed reaction is cytidine(1962) in 23S rRNA + S-adenosyl-L-methionine = 5-methylcytidine(1962) in 23S rRNA + S-adenosyl-L-homocysteine + H(+). Functionally, specifically methylates the cytosine at position 1962 (m5C1962) of 23S rRNA. In Salmonella schwarzengrund (strain CVM19633), this protein is Ribosomal RNA large subunit methyltransferase I.